Here is a 405-residue protein sequence, read N- to C-terminus: Tryptophan synthase beta chain (405 aa).

Lys-98 is subject to N6-(pyridoxal phosphate)lysine.

Belongs to the TrpB family. As to quaternary structure, tetramer of two alpha and two beta chains. Requires pyridoxal 5'-phosphate as cofactor.

It catalyses the reaction (1S,2R)-1-C-(indol-3-yl)glycerol 3-phosphate + L-serine = D-glyceraldehyde 3-phosphate + L-tryptophan + H2O. It participates in amino-acid biosynthesis; L-tryptophan biosynthesis; L-tryptophan from chorismate: step 5/5. The beta subunit is responsible for the synthesis of L-tryptophan from indole and L-serine. This Xylella fastidiosa (strain M12) protein is Tryptophan synthase beta chain.